The sequence spans 231 residues: 2-C-methyl-D-erythritol 4-phosphate cytidylyltransferase (231 aa).

This sequence belongs to the IspD/TarI cytidylyltransferase family. IspD subfamily.

The enzyme catalyses 2-C-methyl-D-erythritol 4-phosphate + CTP + H(+) = 4-CDP-2-C-methyl-D-erythritol + diphosphate. The protein operates within isoprenoid biosynthesis; isopentenyl diphosphate biosynthesis via DXP pathway; isopentenyl diphosphate from 1-deoxy-D-xylulose 5-phosphate: step 2/6. Its function is as follows. Catalyzes the formation of 4-diphosphocytidyl-2-C-methyl-D-erythritol from CTP and 2-C-methyl-D-erythritol 4-phosphate (MEP). This chain is 2-C-methyl-D-erythritol 4-phosphate cytidylyltransferase, found in Rubrobacter xylanophilus (strain DSM 9941 / JCM 11954 / NBRC 16129 / PRD-1).